We begin with the raw amino-acid sequence, 45 residues long: Phospholipase A2 3 (45 aa).

Residues Tyr-20, Gly-24, and Gly-25 each coordinate Ca(2+). Cysteines 21 and 36 form a disulfide. Residue His-39 is part of the active site. Position 40 (Asp-40) interacts with Ca(2+).

It depends on Ca(2+) as a cofactor. Expressed by the venom gland.

It localises to the secreted. It carries out the reaction a 1,2-diacyl-sn-glycero-3-phosphocholine + H2O = a 1-acyl-sn-glycero-3-phosphocholine + a fatty acid + H(+). PLA2 catalyzes the calcium-dependent hydrolysis of the 2-acyl groups in 3-sn-phosphoglycerides. This Bothrops diporus (Chaco lancehead) protein is Phospholipase A2 3.